Consider the following 815-residue polypeptide: Lon protease 1 (815 aa).

Residues 19–212 form the Lon N-terminal domain; that stretch reads MPLLPLRDIV…KLFGQIRSEI (194 aa). 364-371 serves as a coordination point for ATP; that stretch reads GPPGVGKT. One can recognise a Lon proteolytic domain in the interval 601–782; the sequence is KDEIGLAVGL…DDVLRKAMVV (182 aa). Catalysis depends on residues Ser688 and Lys731. A disordered region spans residues 793–815; the sequence is EAGAQQAVMFEQKPPAADEIRAH.

The protein belongs to the peptidase S16 family. In terms of assembly, homohexamer. Organized in a ring with a central cavity.

The protein resides in the cytoplasm. It catalyses the reaction Hydrolysis of proteins in presence of ATP.. In terms of biological role, ATP-dependent serine protease that mediates the selective degradation of mutant and abnormal proteins as well as certain short-lived regulatory proteins. Required for cellular homeostasis and for survival from DNA damage and developmental changes induced by stress. Degrades polypeptides processively to yield small peptide fragments that are 5 to 10 amino acids long. Binds to DNA in a double-stranded, site-specific manner. The sequence is that of Lon protease 1 from Syntrophobacter fumaroxidans (strain DSM 10017 / MPOB).